A 496-amino-acid polypeptide reads, in one-letter code: Glutamyl-tRNA(Gln) amidotransferase subunit A, mitochondrial (496 aa).

Catalysis depends on charge relay system residues K80 and S161. S185 serves as the catalytic Acyl-ester intermediate.

The protein belongs to the amidase family. GatA subfamily. Subunit of the heterotrimeric GatCAB amidotransferase (AdT) complex, composed of A, B and C subunits.

The protein localises to the mitochondrion. It carries out the reaction L-glutamyl-tRNA(Gln) + L-glutamine + ATP + H2O = L-glutaminyl-tRNA(Gln) + L-glutamate + ADP + phosphate + H(+). In terms of biological role, allows the formation of correctly charged Gln-tRNA(Gln) through the transamidation of misacylated Glu-tRNA(Gln) in the mitochondria. The reaction takes place in the presence of glutamine and ATP through an activated gamma-phospho-Glu-tRNA(Gln). The polypeptide is Glutamyl-tRNA(Gln) amidotransferase subunit A, mitochondrial (Culex quinquefasciatus (Southern house mosquito)).